We begin with the raw amino-acid sequence, 259 residues long: MGVATLPAGGLNWLAVWRRNYLAWKKAALASILGNLADPVIYLFGLGAGLGVMVGRVDGVSYTAFLAAGMIATSAMTAATFETIYAAFGRMQGQRTWEAMLYTQLTQGDIVVGEMAWAATKASLAGTGIGIVAAMLGYTHWLALLYALPVIAITGLAFASLGMVVTALAPSYDYFIFYQTLVITPMLFLSGAVFPVDQLPVAFQQIAAFLPLAHSIDLIRPTMLGQPIANVCLHIGVLCIYIVVPFLVSTALLRRRLMR.

One can recognise an ABC transmembrane type-2 domain in the interval 30–256; it reads ASILGNLADP…LVSTALLRRR (227 aa). 6 consecutive transmembrane segments (helical) span residues 32–52, 64–84, 116–136, 141–161, 174–194, and 228–248; these read ILGNLADPVIYLFGLGAGLGV, AFLAAGMIATSAMTAATFETI, AWAATKASLAGTGIGIVAAML, WLALLYALPVIAITGLAFASL, YFIFYQTLVITPMLFLSGAVF, and IANVCLHIGVLCIYIVVPFLV.

It belongs to the ABC-2 integral membrane protein family. Lipooligosaccharide exporter (TC 3.A.1.102) subfamily. The complex is composed of two ATP-binding proteins (NodI) and two transmembrane proteins (NodJ).

Its subcellular location is the cell inner membrane. In terms of biological role, part of the ABC transporter complex NodIJ involved in the export of the nodulation factors (Nod factors), the bacterial signal molecules that induce symbiosis and subsequent nodulation induction. Nod factors are LCO (lipo-chitin oligosaccharide), a modified beta-1,4-linked N-acetylglucosamine oligosaccharide. This subunit encodes the transporter. This is Nodulation protein J (nodJ) from Rhizobium leguminosarum bv. viciae.